We begin with the raw amino-acid sequence, 223 residues long: Cytidylate kinase (223 aa).

10 to 18 contacts ATP; that stretch reads GPASSGKST.

It belongs to the cytidylate kinase family. Type 1 subfamily.

The protein resides in the cytoplasm. The enzyme catalyses CMP + ATP = CDP + ADP. The catalysed reaction is dCMP + ATP = dCDP + ADP. This Streptococcus pneumoniae (strain Hungary19A-6) protein is Cytidylate kinase.